We begin with the raw amino-acid sequence, 300 residues long: Ribosomal protein L11 methyltransferase (300 aa).

The S-adenosyl-L-methionine site is built by threonine 152, glycine 173, aspartate 195, and asparagine 234.

This sequence belongs to the methyltransferase superfamily. PrmA family.

Its subcellular location is the cytoplasm. It carries out the reaction L-lysyl-[protein] + 3 S-adenosyl-L-methionine = N(6),N(6),N(6)-trimethyl-L-lysyl-[protein] + 3 S-adenosyl-L-homocysteine + 3 H(+). In terms of biological role, methylates ribosomal protein L11. This Burkholderia pseudomallei (strain 1710b) protein is Ribosomal protein L11 methyltransferase.